We begin with the raw amino-acid sequence, 100 residues long: Large ribosomal subunit protein uL23 (100 aa).

Belongs to the universal ribosomal protein uL23 family. Part of the 50S ribosomal subunit. Contacts protein L29, and trigger factor when it is bound to the ribosome.

In terms of biological role, one of the early assembly proteins it binds 23S rRNA. One of the proteins that surrounds the polypeptide exit tunnel on the outside of the ribosome. Forms the main docking site for trigger factor binding to the ribosome. This chain is Large ribosomal subunit protein uL23, found in Shewanella pealeana (strain ATCC 700345 / ANG-SQ1).